A 44-amino-acid polypeptide reads, in one-letter code: MTSQNPNQPISYPIFTVRWLAVHTLGVPTVFFLGAIAAMQFIQR.

A helical transmembrane segment spans residues 19-35; the sequence is WLAVHTLGVPTVFFLGA. Histidine 23 lines the heme pocket.

The protein belongs to the PsbE/PsbF family. As to quaternary structure, heterodimer of an alpha subunit and a beta subunit. PSII is composed of 1 copy each of membrane proteins PsbA, PsbB, PsbC, PsbD, PsbE, PsbF, PsbH, PsbI, PsbJ, PsbK, PsbL, PsbM, PsbT, PsbX, PsbY, PsbZ, Psb30/Ycf12, peripheral proteins PsbO, CyanoQ (PsbQ), PsbU, PsbV and a large number of cofactors. It forms dimeric complexes. Requires heme b as cofactor.

Its subcellular location is the cellular thylakoid membrane. Functionally, this b-type cytochrome is tightly associated with the reaction center of photosystem II (PSII). PSII is a light-driven water:plastoquinone oxidoreductase that uses light energy to abstract electrons from H(2)O, generating O(2) and a proton gradient subsequently used for ATP formation. It consists of a core antenna complex that captures photons, and an electron transfer chain that converts photonic excitation into a charge separation. The polypeptide is Cytochrome b559 subunit beta (Trichodesmium erythraeum (strain IMS101)).